Consider the following 304-residue polypeptide: Acetylglutamate kinase (304 aa).

Residues 71 to 72 (GG), Arg-93, and Asn-193 each bind substrate.

The protein belongs to the acetylglutamate kinase family. ArgB subfamily.

Its subcellular location is the cytoplasm. It carries out the reaction N-acetyl-L-glutamate + ATP = N-acetyl-L-glutamyl 5-phosphate + ADP. The protein operates within amino-acid biosynthesis; L-arginine biosynthesis; N(2)-acetyl-L-ornithine from L-glutamate: step 2/4. Its function is as follows. Catalyzes the ATP-dependent phosphorylation of N-acetyl-L-glutamate. This chain is Acetylglutamate kinase, found in Streptomyces avermitilis (strain ATCC 31267 / DSM 46492 / JCM 5070 / NBRC 14893 / NCIMB 12804 / NRRL 8165 / MA-4680).